Consider the following 67-residue polypeptide: MSQPLTVECPTCGAPVEWTAANINRPFCSDRCKLIDLGAWAAEEHKIPVSPDAEDELFSEELPPRAH.

Residues Cys-9, Cys-12, Cys-28, and Cys-32 each contribute to the Zn(2+) site. Residues 48-67 are disordered; that stretch reads PVSPDAEDELFSEELPPRAH.

The protein belongs to the DNA gyrase inhibitor YacG family. Interacts with GyrB. Zn(2+) is required as a cofactor.

Functionally, inhibits all the catalytic activities of DNA gyrase by preventing its interaction with DNA. Acts by binding directly to the C-terminal domain of GyrB, which probably disrupts DNA binding by the gyrase. The sequence is that of DNA gyrase inhibitor YacG from Pseudomonas fluorescens (strain ATCC BAA-477 / NRRL B-23932 / Pf-5).